Reading from the N-terminus, the 120-residue chain is NADH dehydrogenase [ubiquinone] 1 subunit C2 (120 aa).

The residue at position 1 (Met-1) is an N-acetylmethionine. Residues 57–76 traverse the membrane as a helical segment; that stretch reads GLHRQLLYITSFVFVGYYLL.

It belongs to the complex I NDUFC2 subunit family. In terms of assembly, complex I is composed of 45 different subunits. Interacts with TMEM242. There is a minor unacetylated form of subunit B14.5b.

Its subcellular location is the mitochondrion inner membrane. In terms of biological role, accessory subunit of the mitochondrial membrane respiratory chain NADH dehydrogenase (Complex I), that is believed not to be involved in catalysis but required for the complex assembly. Complex I functions in the transfer of electrons from NADH to the respiratory chain. The immediate electron acceptor for the enzyme is believed to be ubiquinone. This Bos taurus (Bovine) protein is NADH dehydrogenase [ubiquinone] 1 subunit C2.